A 303-amino-acid chain; its full sequence is Glutathione transport system permease protein GsiD (303 aa).

Helical transmembrane passes span 40 to 60 (AMTAALFVILLIVVAIFARWI), 105 to 125 (LAAGVFAVFIGVAIGTLLGLL), 144 to 164 (LFAFPGILLAIAVVAVLGSGI), 165 to 185 (ANVIIAVAIFSIPAFARLVRG), 222 to 242 (IVVFFTMRIGTSIISAASLSF), and 266 to 286 (VIAPHVAVFPALAIFLTVLAF). In terms of domain architecture, ABC transmembrane type-1 spans 101 to 290 (AQISLAAGVF…LTVLAFNLLG (190 aa)).

The protein belongs to the binding-protein-dependent transport system permease family. In terms of assembly, the complex is composed of two ATP-binding proteins (GsiA), two transmembrane proteins (GsiC and GsiD) and a solute-binding protein (GsiB).

It localises to the cell inner membrane. Functionally, part of the ABC transporter complex GsiABCD involved in glutathione import. Probably responsible for the translocation of the substrate across the membrane. The polypeptide is Glutathione transport system permease protein GsiD (Shigella flexneri serotype 5b (strain 8401)).